A 401-amino-acid chain; its full sequence is tRNA (guanine-N(7)-)-methyltransferase non-catalytic subunit wuho (401 aa).

The tract at residues 45 to 85 (KGRPRKYFDADSDSDEEQQNGDEPGTGKNNGGGDTGKKDQD) is disordered. Positions 54-64 (ADSDSDEEQQN) are enriched in acidic residues. WD repeat units lie at residues 86–125 (DQTN…RTLK), 174–213 (GHMS…NIET), and 217–255 (GHTE…ELAR).

The protein belongs to the WD repeat TRM82 family. Forms a heterodimer with the catalytic subunit.

The protein resides in the nucleus. It functions in the pathway tRNA modification; N(7)-methylguanine-tRNA biosynthesis. Functionally, required for the formation of N(7)-methylguanine at position 46 (m7G46) in tRNA. In the complex, it is required to stabilize and induce conformational changes of the catalytic subunit. The chain is tRNA (guanine-N(7)-)-methyltransferase non-catalytic subunit wuho from Culex quinquefasciatus (Southern house mosquito).